Consider the following 372-residue polypeptide: Alpha-parvin (372 aa).

Residues 1-11 (MATSPQKSPSV) show a composition bias toward low complexity. The disordered stretch occupies residues 1 to 45 (MATSPQKSPSVPKSPTPKSPPSRKKDDSFLGKLGGTLARRKKAKE). Position 2 is an N-acetylalanine (A2). Phosphoserine is present on residues S8, S14, and S19. The interval 21–25 (PSRKK) is interaction with ARHGAP31. 2 positions are modified to phosphoserine: S28 and S62. Calponin-homology (CH) domains lie at 95-202 (QELM…QYFR) and 262-369 (NVVK…TKYR). Positions 223–372 (GILQSRQIQE…NLFTKYRNVE (150 aa)) are required for interaction with TESK1 and ILK.

The protein belongs to the parvin family. Component of the heterotrimeric IPP (ILK-PINCH-PARVIN) complex composed of ILK, LIMS1/PINCH and PARVA; the complex binds to F-actin via the C-terminal tail of LIMS1 and the N-terminal region of PARVA, promoting F-actin filament bundling. Formation of the IPP complex is dependent on protein kinase C and precedes integrin-mediated cell adhesion and spreading. Interacts with TGFB1I1. Interacts with ARHGAP31. Interacts with the actin cytoskeleton. Interacts (via C-terminus) with TESK1 (via C-terminus); the interaction inhibits TESK1 kinase activity. Interacts with PXN/PAXILLIN (via LD motif 4). In terms of tissue distribution, widely expressed, with highest levels in heart, skeletal muscle, kidney and liver.

Its subcellular location is the cell junction. The protein resides in the focal adhesion. It localises to the cell membrane. It is found in the cytoplasm. The protein localises to the cytoskeleton. Its subcellular location is the myofibril. The protein resides in the sarcomere. It localises to the z line. In terms of biological role, plays a role in sarcomere organization and in smooth muscle cell contraction. Required for normal development of the embryonic cardiovascular system, and for normal septation of the heart outflow tract. Plays a role in sprouting angiogenesis and is required for normal adhesion of vascular smooth muscle cells to endothelial cells during blood vessel development. Plays a role in the reorganization of the actin cytoskeleton, formation of lamellipodia and ciliogenesis. Plays a role in the establishment of cell polarity, cell adhesion, cell spreading, and directed cell migration. Within the IPP (ILK-PINCH-PARVIN) complex, binds to F-actin, promoting F-actin bundling, a process required to generate force for actin cytoskeleton reorganization and subsequent dynamic cell adhesion events such as cell spreading and migration. This is Alpha-parvin (PARVA) from Homo sapiens (Human).